The primary structure comprises 619 residues: ATP-dependent RNA helicase abstrakt (619 aa).

Basic residues predominate over residues 1-11 (MAHVKRYRRSS). Disordered stretches follow at residues 1–25 (MAHVKRYRRSSKSSEEGDLDNEDYV) and 50–69 (ETAQPKSSSENENEDDSQGA). Ser-11, Ser-13, Ser-14, Ser-56, Ser-57, Ser-58, and Ser-66 each carry phosphoserine. The Q motif signature appears at 177 to 205 (RSFREMKFPKGILNGLAAKGIKNPTPIQV). In terms of domain architecture, Helicase ATP-binding spans 208–392 (LPTVLAGRDL…RSALVKPVTI (185 aa)). 221 to 228 (AFTGSGKT) contributes to the ATP binding site. The DEAD box signature appears at 340-343 (DEAD). Positions 403-563 (NVTQQVEYVK…EVPDFLDELA (161 aa)) constitute a Helicase C-terminal domain. A CCHC-type zinc finger spans residues 577–594 (HGCTYCGGLGHRITECPK).

The protein belongs to the DEAD box helicase family. DDX41 subfamily.

It localises to the nucleus. The enzyme catalyses ATP + H2O = ADP + phosphate + H(+). Functionally, ATP-dependent RNA helicase. Is essential for the directed and fasciculated early outgrowth of the bolwig nerves, as well as for its navigation at later stages. Is required during post-transcriptional gene expression. Plays a role during morphogenetic process, apoptosis and the establishment of cell polarity. The chain is ATP-dependent RNA helicase abstrakt (abs) from Drosophila melanogaster (Fruit fly).